A 1016-amino-acid chain; its full sequence is FHIP family protein Bm1_18400 (1016 aa).

Disordered stretches follow at residues 586-608 (DSLRQHTPPPELGEQESSSRSSF) and 757-778 (SDGFKSDTNNDNDDEDPAPLGK).

It belongs to the FHIP family.

The polypeptide is FHIP family protein Bm1_18400 (Brugia malayi (Filarial nematode worm)).